Here is a 394-residue protein sequence, read N- to C-terminus: NAD(P)H-quinone oxidoreductase subunit H (394 aa).

It belongs to the complex I 49 kDa subunit family. In terms of assembly, NDH-1 can be composed of about 15 different subunits; different subcomplexes with different compositions have been identified which probably have different functions.

The protein localises to the cellular thylakoid membrane. It carries out the reaction a plastoquinone + NADH + (n+1) H(+)(in) = a plastoquinol + NAD(+) + n H(+)(out). The enzyme catalyses a plastoquinone + NADPH + (n+1) H(+)(in) = a plastoquinol + NADP(+) + n H(+)(out). NDH-1 shuttles electrons from an unknown electron donor, via FMN and iron-sulfur (Fe-S) centers, to quinones in the respiratory and/or the photosynthetic chain. The immediate electron acceptor for the enzyme in this species is believed to be plastoquinone. Couples the redox reaction to proton translocation, and thus conserves the redox energy in a proton gradient. Cyanobacterial NDH-1 also plays a role in inorganic carbon-concentration. The sequence is that of NAD(P)H-quinone oxidoreductase subunit H from Synechococcus sp. (strain RCC307).